The primary structure comprises 351 residues: 3-dehydroquinate synthase (351 aa).

NAD(+) is bound by residues 60–65 (DGEEYK), 94–98 (GVISD), 118–119 (TT), Lys-131, Lys-140, and 158–161 (FLKT). Zn(2+) is bound by residues Glu-173, His-239, and His-256.

Belongs to the sugar phosphate cyclases superfamily. Dehydroquinate synthase family. Co(2+) serves as cofactor. Requires Zn(2+) as cofactor. The cofactor is NAD(+).

Its subcellular location is the cytoplasm. The enzyme catalyses 7-phospho-2-dehydro-3-deoxy-D-arabino-heptonate = 3-dehydroquinate + phosphate. It participates in metabolic intermediate biosynthesis; chorismate biosynthesis; chorismate from D-erythrose 4-phosphate and phosphoenolpyruvate: step 2/7. Functionally, catalyzes the conversion of 3-deoxy-D-arabino-heptulosonate 7-phosphate (DAHP) to dehydroquinate (DHQ). The chain is 3-dehydroquinate synthase from Campylobacter jejuni subsp. jejuni serotype O:6 (strain 81116 / NCTC 11828).